The chain runs to 212 residues: Protein-L-isoaspartate O-methyltransferase (212 aa).

Serine 60 is an active-site residue.

The protein belongs to the methyltransferase superfamily. L-isoaspartyl/D-aspartyl protein methyltransferase family.

The protein localises to the cytoplasm. The enzyme catalyses [protein]-L-isoaspartate + S-adenosyl-L-methionine = [protein]-L-isoaspartate alpha-methyl ester + S-adenosyl-L-homocysteine. Its function is as follows. Catalyzes the methyl esterification of L-isoaspartyl residues in peptides and proteins that result from spontaneous decomposition of normal L-aspartyl and L-asparaginyl residues. It plays a role in the repair and/or degradation of damaged proteins. The protein is Protein-L-isoaspartate O-methyltransferase of Methanococcus maripaludis (strain DSM 14266 / JCM 13030 / NBRC 101832 / S2 / LL).